Reading from the N-terminus, the 285-residue chain is MTATLIDGNALSKTLRAQAAERAAALAARGHRPGLAVILVGDNPASEVYVRNKIKACEDNGFFSLKDRYPATLSEPELLARIDELNRDPKIHGILVQLPLPAHIDSHKVIEAIAPEKDVDGFHVANAGALLTGKPLFRPCTPYGVMKMFEAYKIPLQGANAVVIGRSNIVGKPMALLLLEAGATVTICHSKTRELAAHTRAADIVVAAVGKRNVLTADMVKPGATVIDVGMNRNDEGKLCGDVDFAGVSQVAGHITPVPGGVGPMTITMLLVNTIEAAERAAAAA.

Residues 165–167 (GRS) and Ser-190 each bind NADP(+).

This sequence belongs to the tetrahydrofolate dehydrogenase/cyclohydrolase family. Homodimer.

The catalysed reaction is (6R)-5,10-methylene-5,6,7,8-tetrahydrofolate + NADP(+) = (6R)-5,10-methenyltetrahydrofolate + NADPH. It catalyses the reaction (6R)-5,10-methenyltetrahydrofolate + H2O = (6R)-10-formyltetrahydrofolate + H(+). It participates in one-carbon metabolism; tetrahydrofolate interconversion. In terms of biological role, catalyzes the oxidation of 5,10-methylenetetrahydrofolate to 5,10-methenyltetrahydrofolate and then the hydrolysis of 5,10-methenyltetrahydrofolate to 10-formyltetrahydrofolate. This Burkholderia pseudomallei (strain 1710b) protein is Bifunctional protein FolD.